The chain runs to 373 residues: Ribosomal RNA small subunit methyltransferase H (373 aa).

Residues 92–94 (GGH), D111, Y138, D159, and Q166 each bind S-adenosyl-L-methionine. Composition is skewed to basic and acidic residues over residues 343 to 355 (AERA…ERNP) and 363 to 373 (RALEKVGGRGS). The tract at residues 343-373 (AERADEQEIERNPRSAPVRLRALEKVGGRGS) is disordered.

Belongs to the methyltransferase superfamily. RsmH family.

Its subcellular location is the cytoplasm. It catalyses the reaction cytidine(1402) in 16S rRNA + S-adenosyl-L-methionine = N(4)-methylcytidine(1402) in 16S rRNA + S-adenosyl-L-homocysteine + H(+). Functionally, specifically methylates the N4 position of cytidine in position 1402 (C1402) of 16S rRNA. The protein is Ribosomal RNA small subunit methyltransferase H of Mycolicibacterium smegmatis (strain ATCC 700084 / mc(2)155) (Mycobacterium smegmatis).